We begin with the raw amino-acid sequence, 388 residues long: MIISSSSDYREAARRRLPPFLFHYIDGGAYAEATLRRNVEDLSDLALRQRVLKSVGEVDLSTTLLKQQLSMPVGLAPVGLTGMYARRGEVQAAQAATQKGIPFTLSTVSVCSIEEVQSQVGKPIWFQLYVLKDRGFMKNALERAWAAGIRTLVFTVDMPVPGARYRDAHSGMSGPNAAFRRMVQAVLHPFWAYDVGLMGTPHDLGNVSAYRKEKTSLEDYVGWLGNNFDPSIGWKDLEWIREFWKGPMVIKGILDPEDARDAVRFGADGIIVSNHGGRQLDGVLSSARAMPAIADAVKGEMTLLADSGIRSGLDVVRMLAQGADGVLLGRAFVYALAAAGRAGVENLLDIIAKEMRVAMTLTGARAISDISRDSLVREIERPLARAAQ.

The FMN hydroxy acid dehydrogenase domain maps to 1-380 (MIISSSSDYR…SRDSLVREIE (380 aa)). Position 24 (Y24) interacts with substrate. 2 residues coordinate FMN: S106 and Q127. Position 129 (Y129) interacts with substrate. T155 is a binding site for FMN. R164 lines the substrate pocket. K251 is an FMN binding site. Residue H275 is the Proton acceptor of the active site. R278 contacts substrate. FMN is bound at residue 306–330 (DSGIRSGLDVVRMLAQGADGVLLGR).

This sequence belongs to the FMN-dependent alpha-hydroxy acid dehydrogenase family. The cofactor is FMN.

It is found in the cell inner membrane. It catalyses the reaction (S)-lactate + A = pyruvate + AH2. Catalyzes the conversion of L-lactate to pyruvate. Is coupled to the respiratory chain. The polypeptide is L-lactate dehydrogenase (Xanthobacter autotrophicus (strain ATCC BAA-1158 / Py2)).